A 301-amino-acid polypeptide reads, in one-letter code: Oxygen-dependent coproporphyrinogen-III oxidase (301 aa).

The interval 49–58 (VMVDGAVIEK) is important for dimerization. A substrate-binding site is contributed by S93. H107 serves as the catalytic Proton donor. Substrate contacts are provided by residues 109 to 111 (NVR) and 259 to 261 (GGR). The tract at residues 241–276 (YAEFNLVIDRGTKFGLQSGGRTESILISLPPRARWG) is important for dimerization.

Belongs to the aerobic coproporphyrinogen-III oxidase family. As to quaternary structure, homodimer.

The protein resides in the cytoplasm. It carries out the reaction coproporphyrinogen III + O2 + 2 H(+) = protoporphyrinogen IX + 2 CO2 + 2 H2O. Its pathway is porphyrin-containing compound metabolism; protoporphyrin-IX biosynthesis; protoporphyrinogen-IX from coproporphyrinogen-III (O2 route): step 1/1. Functionally, involved in the heme biosynthesis. Catalyzes the aerobic oxidative decarboxylation of propionate groups of rings A and B of coproporphyrinogen-III to yield the vinyl groups in protoporphyrinogen-IX. The polypeptide is Oxygen-dependent coproporphyrinogen-III oxidase (Leishmania major).